The sequence spans 169 residues: Histone H1.9 (169 aa).

Polar residues-rich tracts occupy residues 1 to 10 (MSLVSPSPDS) and 19 to 36 (DASTSQVPSQSESKIGPN). The interval 1-36 (MSLVSPSPDSNAVMAGDQDASTSQVPSQSESKIGPN) is disordered. The region spanning 43–116 (RKPTMSKVIL…GASGSFRLGK (74 aa)) is the H15 domain. Phosphoserine occurs at positions 62 and 65. Residues 118–142 (QAFKSKCKAKRRQRRQKPGQRRTGS) show a composition bias toward basic residues. The disordered stretch occupies residues 118-154 (QAFKSKCKAKRRQRRQKPGQRRTGSRRSLLGSKKSNN).

This sequence belongs to the histone H1/H5 family.

It is found in the nucleus. The protein localises to the chromosome. Its function is as follows. DNA-binding protein that may be implicated in chromatin remodeling and/or transcriptional regulation during spermiogenesis, the process of spermatid maturation into spermatozoa. This is Histone H1.9 from Rattus norvegicus (Rat).